The sequence spans 841 residues: DNA ligase (841 aa).

NAD(+) is bound by residues 33-37 (DAQYD), 82-83 (SL), and glutamate 114. Lysine 116 (N6-AMP-lysine intermediate) is an active-site residue. Residues arginine 137, glutamate 174, lysine 300, and lysine 324 each coordinate NAD(+). Cysteine 418, cysteine 421, cysteine 436, and cysteine 442 together coordinate Zn(2+). Positions 758–841 (EKTGPLDGQT…AFLGEHGQQR (84 aa)) constitute a BRCT domain.

The protein belongs to the NAD-dependent DNA ligase family. LigA subfamily. Mg(2+) is required as a cofactor. It depends on Mn(2+) as a cofactor.

The enzyme catalyses NAD(+) + (deoxyribonucleotide)n-3'-hydroxyl + 5'-phospho-(deoxyribonucleotide)m = (deoxyribonucleotide)n+m + AMP + beta-nicotinamide D-nucleotide.. DNA ligase that catalyzes the formation of phosphodiester linkages between 5'-phosphoryl and 3'-hydroxyl groups in double-stranded DNA using NAD as a coenzyme and as the energy source for the reaction. It is essential for DNA replication and repair of damaged DNA. The sequence is that of DNA ligase from Xanthomonas oryzae pv. oryzae (strain MAFF 311018).